The primary structure comprises 202 residues: LexA repressor (202 aa).

The H-T-H motif DNA-binding region spans 28 to 48; it reads RAEIAQQLGFRSPNAAEEHLK. Active-site for autocatalytic cleavage activity residues include Ser119 and Lys156.

The protein belongs to the peptidase S24 family. As to quaternary structure, homodimer.

It catalyses the reaction Hydrolysis of Ala-|-Gly bond in repressor LexA.. Its function is as follows. Represses a number of genes involved in the response to DNA damage (SOS response), including recA and lexA. In the presence of single-stranded DNA, RecA interacts with LexA causing an autocatalytic cleavage which disrupts the DNA-binding part of LexA, leading to derepression of the SOS regulon and eventually DNA repair. The sequence is that of LexA repressor from Pectobacterium atrosepticum (strain SCRI 1043 / ATCC BAA-672) (Erwinia carotovora subsp. atroseptica).